The sequence spans 344 residues: Lipase chaperone (344 aa).

A helical membrane pass occupies residues 14-34; that stretch reads VAVYGAVGLAAIAGVAIWSGA.

Belongs to the lipase chaperone family.

Its subcellular location is the cell inner membrane. May be involved in the folding of the extracellular lipase during its passage through the periplasm. This is Lipase chaperone from Burkholderia ambifaria (strain MC40-6).